Consider the following 2517-residue polypeptide: Serine/threonine-protein kinase ATR (2517 aa).

The stretch at 1178–1214 is one HEAT repeat; the sequence is EPMLEQIVNVLMAGCQHDDSQLQMASAKCLGELGAID. Positions 1509–2066 constitute an FAT domain; that stretch reads LVSRASYNCG…LWMLLPHFKS (558 aa). The residue at position 1569 (serine 1569) is a Phosphoserine. Residue tyrosine 1570 is modified to Phosphotyrosine. Serine 1573 bears the Phosphoserine mark. Threonine 1575 carries the phosphothreonine modification. A PI3K/PI4K catalytic domain is found at 2184–2508; the sequence is FQESVLILRS…EATKVDNLAS (325 aa). Positions 2190 to 2196 are G-loop; sequence ILRSAAK. A catalytic loop region spans residues 2360-2368; sequence GLGDRHGEN. The interval 2380–2404 is activation loop; the sequence is HVDFNCLFNQGELLPYPEVVPFRLT. The region spanning 2485–2517 is the FATC domain; the sequence is IPLSTEGQVNFLINEATKVDNLASMYIGWGAFL.

It belongs to the PI3/PI4-kinase family. ATM subfamily. As to quaternary structure, interacts with mus304. Requires Mn(2+) as cofactor.

Its subcellular location is the nucleus. It catalyses the reaction L-seryl-[protein] + ATP = O-phospho-L-seryl-[protein] + ADP + H(+). It carries out the reaction L-threonyl-[protein] + ATP = O-phospho-L-threonyl-[protein] + ADP + H(+). Its function is as follows. Serine/threonine protein kinase which activates checkpoint signaling upon genotoxic stresses such as ionizing radiation (IR), ultraviolet light (UV), or DNA replication stalling, thereby acting as a DNA damage sensor. Recognizes the substrate consensus sequence [ST]-Q. Phosphorylates various proteins, which collectively inhibits DNA replication and mitosis and promotes DNA repair and recombination. Phosphorylates grp/CHK1. Phosphorylates 'Ser-137' of histone variant H2AX/H2AV at sites of DNA damage, thereby regulating DNA damage response mechanism. Essential for the DNA damage checkpoint in larval imaginal disks and neuroblasts and for the DNA replication checkpoint in the embryo. Also has an essential role during early nuclear divisions in embryos, where it is required to delay mitosis in response to incomplete DNA replication. Also plays an important role during meiosis, where it may monitor double-strand-break repair during meiotic crossing over, to regulate the progression of prophase I, and to enforce metaphase I delay observed at the end of oogenesis. Involved in telomere maintenance and prevention of telomere fusion; potentially functioning downstream of moi/modigliani. This Drosophila melanogaster (Fruit fly) protein is Serine/threonine-protein kinase ATR (mei-41).